A 191-amino-acid polypeptide reads, in one-letter code: Holliday junction branch migration complex subunit RuvA (191 aa).

The tract at residues 1–63 is domain I; sequence MIRYLRGLVL…EEGLSLYGFP (63 aa). Residues 64-136 form a domain II region; that stretch reads DEENLALFEL…LKGKVPPHLL (73 aa). Residues 136-140 are flexible linker; that stretch reads LAGEK. Residues 141-191 are domain III; the sequence is VESEAAEEAVMALAALGFKEAQARAVVLDLLAQNPKARAQDLIKEALKRLR.

It belongs to the RuvA family. In terms of assembly, homotetramer. Forms an RuvA(8)-RuvB(12)-Holliday junction (HJ) complex. HJ DNA is sandwiched between 2 RuvA tetramers; dsDNA enters through RuvA and exits via RuvB. An RuvB hexamer assembles on each DNA strand where it exits the tetramer. Each RuvB hexamer is contacted by two RuvA subunits (via domain III) on 2 adjacent RuvB subunits; this complex drives branch migration. In the full resolvosome a probable DNA-RuvA(4)-RuvB(12)-RuvC(2) complex forms which resolves the HJ.

The protein resides in the cytoplasm. Functionally, the RuvA-RuvB-RuvC complex processes Holliday junction (HJ) DNA during genetic recombination and DNA repair, while the RuvA-RuvB complex plays an important role in the rescue of blocked DNA replication forks via replication fork reversal (RFR). RuvA specifically binds to HJ cruciform DNA, conferring on it an open structure. The RuvB hexamer acts as an ATP-dependent pump, pulling dsDNA into and through the RuvAB complex. HJ branch migration allows RuvC to scan DNA until it finds its consensus sequence, where it cleaves and resolves the cruciform DNA. This Thermus thermophilus (strain ATCC BAA-163 / DSM 7039 / HB27) protein is Holliday junction branch migration complex subunit RuvA.